The following is a 192-amino-acid chain: Intraflagellar transport protein 22 (192 aa).

Residues 12–19 (GPQRTGKT) and 62–69 (WDVSGSVQ) contribute to the GTP site.

This sequence belongs to the small GTPase superfamily. Rab family. As to quaternary structure, component of the IFT complex B, composed of IFT88, IFT70, IFT52, IFT46, IFT27, IFT25 and IFT22.

The protein localises to the cell projection. Its subcellular location is the cilium. It is found in the flagellum. Functionally, component of the intraflagellar transport (IFT) complex B. Functions in regulating the cellular pool size of both complex A and complex B and thus plays a critical role in determining the cellular availability of IFT particles. The chain is Intraflagellar transport protein 22 (FAP9) from Chlamydomonas reinhardtii (Chlamydomonas smithii).